Reading from the N-terminus, the 352-residue chain is Small glutamine-rich tetratricopeptide repeat-containing protein 2 (352 aa).

The segment covering 80 to 97 (PAAASSSSTAPAAAAATP) has biased composition (low complexity). Residues 80–103 (PAAASSSSTAPAAAAATPSDEDLA) form a disordered region. TPR repeat units follow at residues 105–138 (AEQL…NPNS), 140–172 (VYFS…DPKF), and 173–206 (GKAY…DPSN). The tract at residues 217 to 236 (KEQLSSSSSSNANDATASRG) is disordered.

This sequence belongs to the SGT family.

Co-chaperone that binds to the molecular chaperone Hsp70 and regulates Hsp70 ATPase activity. This is Small glutamine-rich tetratricopeptide repeat-containing protein 2 from Mycosarcoma maydis (Corn smut fungus).